A 410-amino-acid chain; its full sequence is Adenosylhomocysteinase (410 aa).

Substrate contacts are provided by Asp-117 and Glu-142. 143 to 145 (TTT) is an NAD(+) binding site. Substrate-binding residues include Lys-172 and Asp-176. Residues Asn-177, 206–211 (GYGYCG), Glu-229, 285–287 (AGH), and Asn-332 each bind NAD(+).

It belongs to the adenosylhomocysteinase family. NAD(+) is required as a cofactor.

It localises to the cytoplasm. It carries out the reaction S-adenosyl-L-homocysteine + H2O = L-homocysteine + adenosine. It participates in amino-acid biosynthesis; L-homocysteine biosynthesis; L-homocysteine from S-adenosyl-L-homocysteine: step 1/1. In terms of biological role, may play a key role in the regulation of the intracellular concentration of adenosylhomocysteine. In Thermoplasma volcanium (strain ATCC 51530 / DSM 4299 / JCM 9571 / NBRC 15438 / GSS1), this protein is Adenosylhomocysteinase.